A 291-amino-acid chain; its full sequence is Nucleotide-binding protein jk1004 (291 aa).

16–23 (GMSGAGRR) is an ATP binding site. 67–70 (DVRS) is a GTP binding site.

Belongs to the RapZ-like family.

Functionally, displays ATPase and GTPase activities. The sequence is that of Nucleotide-binding protein jk1004 from Corynebacterium jeikeium (strain K411).